Reading from the N-terminus, the 128-residue chain is Small ribosomal subunit protein uS12 (128 aa).

A 3-methylthioaspartic acid modification is found at Asp-89. Residues Ser-101–Lys-128 are disordered. Residues Gly-113–Lys-128 show a composition bias toward basic residues.

It belongs to the universal ribosomal protein uS12 family. In terms of assembly, part of the 30S ribosomal subunit. Contacts proteins S8 and S17. May interact with IF1 in the 30S initiation complex.

Functionally, with S4 and S5 plays an important role in translational accuracy. Its function is as follows. Interacts with and stabilizes bases of the 16S rRNA that are involved in tRNA selection in the A site and with the mRNA backbone. Located at the interface of the 30S and 50S subunits, it traverses the body of the 30S subunit contacting proteins on the other side and probably holding the rRNA structure together. The combined cluster of proteins S8, S12 and S17 appears to hold together the shoulder and platform of the 30S subunit. The polypeptide is Small ribosomal subunit protein uS12 (Prosthecochloris aestuarii (strain DSM 271 / SK 413)).